A 111-amino-acid chain; its full sequence is Small ribosomal subunit protein uS10 (111 aa).

It belongs to the universal ribosomal protein uS10 family. As to quaternary structure, part of the 30S ribosomal subunit.

In terms of biological role, involved in the binding of tRNA to the ribosomes. This is Small ribosomal subunit protein uS10 from Ehrlichia ruminantium (strain Welgevonden).